Reading from the N-terminus, the 425-residue chain is tRNA(Ile)-lysidine synthase (425 aa).

27-32 (SGGLDS) is a binding site for ATP.

The protein belongs to the tRNA(Ile)-lysidine synthase family.

Its subcellular location is the cytoplasm. It carries out the reaction cytidine(34) in tRNA(Ile2) + L-lysine + ATP = lysidine(34) in tRNA(Ile2) + AMP + diphosphate + H(+). In terms of biological role, ligates lysine onto the cytidine present at position 34 of the AUA codon-specific tRNA(Ile) that contains the anticodon CAU, in an ATP-dependent manner. Cytidine is converted to lysidine, thus changing the amino acid specificity of the tRNA from methionine to isoleucine. This chain is tRNA(Ile)-lysidine synthase, found in Streptococcus pneumoniae (strain Hungary19A-6).